Reading from the N-terminus, the 118-residue chain is Basic phospholipase A2 PA-10A (118 aa).

Disulfide bonds link Cys-11–Cys-71, Cys-27–Cys-117, Cys-29–Cys-45, Cys-44–Cys-98, Cys-51–Cys-91, Cys-60–Cys-84, and Cys-78–Cys-89. 3 residues coordinate Ca(2+): Tyr-28, Gly-30, and Gly-32. Residue His-48 is part of the active site. Position 49 (Asp-49) interacts with Ca(2+). The active site involves Asp-92.

Belongs to the phospholipase A2 family. Group I subfamily. D49 sub-subfamily. Ca(2+) serves as cofactor. Expressed by the venom gland.

It localises to the secreted. The catalysed reaction is a 1,2-diacyl-sn-glycero-3-phosphocholine + H2O = a 1-acyl-sn-glycero-3-phosphocholine + a fatty acid + H(+). Its function is as follows. PLA2 catalyzes the calcium-dependent hydrolysis of the 2-acyl groups in 3-sn-phosphoglycerides. In Pseudechis australis (Mulga snake), this protein is Basic phospholipase A2 PA-10A.